Here is a 259-residue protein sequence, read N- to C-terminus: Hydroxyacylglutathione hydrolase (259 aa).

Residues His-56, His-58, Asp-60, His-61, His-112, Asp-133, and His-171 each coordinate Zn(2+).

It belongs to the metallo-beta-lactamase superfamily. Glyoxalase II family. Monomer. It depends on Zn(2+) as a cofactor.

The enzyme catalyses an S-(2-hydroxyacyl)glutathione + H2O = a 2-hydroxy carboxylate + glutathione + H(+). Its pathway is secondary metabolite metabolism; methylglyoxal degradation; (R)-lactate from methylglyoxal: step 2/2. In terms of biological role, thiolesterase that catalyzes the hydrolysis of S-D-lactoyl-glutathione to form glutathione and D-lactic acid. The protein is Hydroxyacylglutathione hydrolase of Pseudomonas putida (strain ATCC 47054 / DSM 6125 / CFBP 8728 / NCIMB 11950 / KT2440).